The primary structure comprises 591 residues: uncharacterized protein (591 aa).

The first 30 residues, Met1 to Ala30, serve as a signal peptide directing secretion. The N-palmitoyl cysteine moiety is linked to residue Cys31. Cys31 is lipidated: S-diacylglycerol cysteine. Positions Lys476 to Glu488 are enriched in basic and acidic residues. Disordered regions lie at residues Lys476 to Asn497 and Ser510 to Gly535. Low complexity predominate over residues Ser510–Ser523.

To T.pallidum TmpC.

It localises to the cell membrane. This is an uncharacterized protein from Mycoplasma genitalium (strain ATCC 33530 / DSM 19775 / NCTC 10195 / G37) (Mycoplasmoides genitalium).